Here is a 363-residue protein sequence, read N- to C-terminus: 3-ketodihydrosphingosine reductase TSC10 (363 aa).

NADP(+) is bound at residue leucine 10. Positions 13, 15, and 17 each coordinate NADPH. Residues 13 to 17 (GGSQG) carry the GXSXG motif. Leucine 18 lines the NADP(+) pocket. The NADPH site is built by arginine 40, lysine 44, aspartate 131, and leucine 132. Residue aspartate 131 coordinates NADP(+). The active-site Proton donor is serine 206. NADP(+)-binding residues include tyrosine 220, lysine 224, and serine 253. Tyrosine 220 (proton acceptor) is an active-site residue. The active-site Lowers pKa of active site Tyr is lysine 224. The helical transmembrane segment at 324-344 (FVQWLIGVIANLLVVPFYMVL) threads the bilayer.

The protein belongs to the short-chain dehydrogenases/reductases (SDR) family.

It is found in the endoplasmic reticulum membrane. It carries out the reaction sphinganine + NADP(+) = 3-oxosphinganine + NADPH + H(+). It participates in lipid metabolism; sphingolipid metabolism. Functionally, catalyzes the reduction of 3'-oxosphinganine (3-ketodihydrosphingosine/KDS) to sphinganine (dihydrosphingosine/DHS), the second step of de novo sphingolipid biosynthesis. The protein is 3-ketodihydrosphingosine reductase TSC10 (TSC10) of Candida glabrata (strain ATCC 2001 / BCRC 20586 / JCM 3761 / NBRC 0622 / NRRL Y-65 / CBS 138) (Yeast).